The primary structure comprises 396 residues: Arginine biosynthesis bifunctional protein ArgJ (396 aa).

6 residues coordinate substrate: threonine 150, lysine 177, threonine 188, glutamate 267, asparagine 391, and threonine 396. Threonine 188 (nucleophile) is an active-site residue.

This sequence belongs to the ArgJ family. As to quaternary structure, heterotetramer of two alpha and two beta chains.

Its subcellular location is the cytoplasm. The enzyme catalyses N(2)-acetyl-L-ornithine + L-glutamate = N-acetyl-L-glutamate + L-ornithine. The catalysed reaction is L-glutamate + acetyl-CoA = N-acetyl-L-glutamate + CoA + H(+). It participates in amino-acid biosynthesis; L-arginine biosynthesis; L-ornithine and N-acetyl-L-glutamate from L-glutamate and N(2)-acetyl-L-ornithine (cyclic): step 1/1. Its pathway is amino-acid biosynthesis; L-arginine biosynthesis; N(2)-acetyl-L-ornithine from L-glutamate: step 1/4. Functionally, catalyzes two activities which are involved in the cyclic version of arginine biosynthesis: the synthesis of N-acetylglutamate from glutamate and acetyl-CoA as the acetyl donor, and of ornithine by transacetylation between N(2)-acetylornithine and glutamate. This is Arginine biosynthesis bifunctional protein ArgJ from Wolinella succinogenes (strain ATCC 29543 / DSM 1740 / CCUG 13145 / JCM 31913 / LMG 7466 / NCTC 11488 / FDC 602W) (Vibrio succinogenes).